Reading from the N-terminus, the 276-residue chain is D-apionate oxidoisomerase (276 aa).

Residues 12-14, Glu33, and Asp69 contribute to the NAD(+) site; that span reads GKM. Zn(2+)-binding residues include His114 and Glu184.

It belongs to the ApnO family. It depends on Zn(2+) as a cofactor.

The enzyme catalyses D-apionate + NAD(+) = 3-oxoisoapionate + NADH + H(+). It participates in carbohydrate metabolism. Functionally, involved in catabolism of D-apiose. Catalyzes the conversion of D-apionate to 3-oxo-isoapionate. This is D-apionate oxidoisomerase from Cupriavidus necator (strain ATCC 43291 / DSM 13513 / CCUG 52238 / LMG 8453 / N-1) (Ralstonia eutropha).